The sequence spans 156 residues: Homeobox-leucine zipper protein ATHB-52 (156 aa).

Residues 8–67 constitute a DNA-binding region (homeobox); it reads GKNKKKRLTQDQVRQLEKCFTMNKKLEPDLKLQLSNQLGLPQRQVAVWFQNKRARFKTQS. The segment at 68-96 is leucine-zipper; that stretch reads LEVQHCTLQSKHEAALSDKAKLEHQVQFL.

Belongs to the HD-ZIP homeobox family. Class I subfamily. As to expression, expressed in roots and flowers.

The protein localises to the nucleus. Functionally, probable transcription factor. The polypeptide is Homeobox-leucine zipper protein ATHB-52 (ATHB-52) (Arabidopsis thaliana (Mouse-ear cress)).